Consider the following 212-residue polypeptide: Cell division protein SepF (212 aa).

Positions 32 to 104 are disordered; the sequence is RYADPDTSYD…APLGSDAHRE (73 aa). Residues 64 to 73 show a composition bias toward acidic residues; that stretch reads EAEEDGGDYG.

It belongs to the SepF family. In terms of assembly, homodimer. Interacts with FtsZ.

The protein localises to the cytoplasm. Functionally, cell division protein that is part of the divisome complex and is recruited early to the Z-ring. Probably stimulates Z-ring formation, perhaps through the cross-linking of FtsZ protofilaments. Its function overlaps with FtsA. In Saccharopolyspora erythraea (strain ATCC 11635 / DSM 40517 / JCM 4748 / NBRC 13426 / NCIMB 8594 / NRRL 2338), this protein is Cell division protein SepF.